Here is a 135-residue protein sequence, read N- to C-terminus: Probable histone H2A.7 (135 aa).

The protein belongs to the histone H2A family. The nucleosome is a histone octamer containing two molecules each of H2A, H2B, H3 and H4 assembled in one H3-H4 heterotetramer and two H2A-H2B heterodimers. The octamer wraps approximately 147 bp of DNA.

The protein localises to the nucleus. It localises to the chromosome. Core component of nucleosome. Nucleosomes wrap and compact DNA into chromatin, limiting DNA accessibility to the cellular machineries which require DNA as a template. Histones thereby play a central role in transcription regulation, DNA repair, DNA replication and chromosomal stability. DNA accessibility is regulated via a complex set of post-translational modifications of histones, also called histone code, and nucleosome remodeling. The protein is Probable histone H2A.7 of Oryza sativa subsp. indica (Rice).